A 268-amino-acid chain; its full sequence is Unknown seed protein USP (268 aa).

The N-terminal stretch at 1 to 25 is a signal peptide; it reads MEFAHLTVLSLFCLAFVGITATSSG. Residues 68-259 enclose the BURP domain; sequence LFFEHDLHPG…GNKAAAWVPN (192 aa).

Expressed in seeds. Detected only in the embryo. In germinating seedlings, detected in roots, root caps, root hairs, vascular bundle, mesophyll cells and epidermal cells of the cotyledons and the hypocotyl.

Its subcellular location is the golgi apparatus. The protein localises to the golgi stack. The protein resides in the prevacuolar compartment. Associated with the protein storage vacuole formation. The chain is Unknown seed protein USP from Vicia faba (Broad bean).